The chain runs to 172 residues: C-phycocyanin-2 beta subunit (172 aa).

The residue at position 72 (Asn72) is an N4-methylasparagine. (2R,3E)-phycocyanobilin is bound by residues Cys82 and Cys153.

It belongs to the phycobiliprotein family. In terms of assembly, heterodimer of an alpha and a beta subunit, which further assembles into trimers and the trimers into hexamers. Post-translationally, contains two covalently linked bilin chromophores.

It is found in the cellular thylakoid membrane. In terms of biological role, light-harvesting photosynthetic bile pigment-protein from the phycobiliprotein complex (phycobilisome, PBS). Phycocyanin is the major phycobiliprotein in the PBS rod. The protein is C-phycocyanin-2 beta subunit (cpcB2) of Pseudanabaena tenuis (strain PCC 7409).